We begin with the raw amino-acid sequence, 176 residues long: MKSLLLTILLLGLVAVLKAQEAPPDDLVDYSGIWYAKAMVHNGTLPSHKIPSIVFPVRIIALEEGDLETTVVFWNNGHCREFKFVMKKTEEPGKYTAFHNTKVIHVEKTSVNEHYIFYCEGRHNGTSSFGMGKLMGRDSGENPEAMEEFKNFIKRMNLRLENMFVPEIGDKCVESD.

Positions 1 to 19 (MKSLLLTILLLGLVAVLKA) are cleaved as a signal peptide. N-linked (GlcNAc...) asparagine glycosylation is found at Asn42 and Asn124. A disulfide bridge connects residues Cys79 and Cys172.

It belongs to the calycin superfamily. Lipocalin family. Expressed in the liver (at protein level). Expressed in epididymis.

It localises to the secreted. Its function is as follows. Involved in the regulation of systematic glucose homeostasis and insulin sensitivity. Involved in the regulation of liver lipid levels by positive regulation of hepatic lipogenesis and negative regulation of fatty acid beta-oxidation; via downstream transcriptional regulation of CPT1A and hepatic lipogenic program gene expression. May regulate hepatic lipogenesis and fatty acid beta-oxidation in an autocrine or paracrine manner. This Mus musculus (Mouse) protein is Odorant-binding protein 2a (Obp2a).